Consider the following 116-residue polypeptide: Iron-sulfur cluster insertion protein ErpA (116 aa).

Residues Cys44, Cys108, and Cys110 each coordinate iron-sulfur cluster.

It belongs to the HesB/IscA family. In terms of assembly, homodimer. Requires iron-sulfur cluster as cofactor.

Functionally, required for insertion of 4Fe-4S clusters for at least IspG. The sequence is that of Iron-sulfur cluster insertion protein ErpA from Shewanella denitrificans (strain OS217 / ATCC BAA-1090 / DSM 15013).